A 213-amino-acid chain; its full sequence is LexA repressor (213 aa).

Residues 31 to 51 (RAEISRELGFRSPNAAEEYLK) constitute a DNA-binding region (H-T-H motif). Residues Ser129 and Lys166 each act as for autocatalytic cleavage activity in the active site.

Belongs to the peptidase S24 family. As to quaternary structure, homodimer.

The enzyme catalyses Hydrolysis of Ala-|-Gly bond in repressor LexA.. In terms of biological role, represses a number of genes involved in the response to DNA damage (SOS response), including recA and lexA. In the presence of single-stranded DNA, RecA interacts with LexA causing an autocatalytic cleavage which disrupts the DNA-binding part of LexA, leading to derepression of the SOS regulon and eventually DNA repair. The polypeptide is LexA repressor (Mannheimia succiniciproducens (strain KCTC 0769BP / MBEL55E)).